Here is a 216-residue protein sequence, read N- to C-terminus: Ras-like protein (216 aa).

16-23 provides a ligand contact to GTP; that stretch reads GGGGVGKS. The short motif at 38–46 is the Effector region element; that stretch reads YDPTIEDSY. GTP-binding positions include 63-67 and 122-125; these read DTAGQ and NKCD. S-palmitoyl cysteine attachment occurs at residues Cys-209 and Cys-210. Cys-213 carries the cysteine methyl ester modification. Cys-213 carries the S-geranylgeranyl cysteine lipid modification. Residues 214-216 constitute a propeptide, removed in mature form; that stretch reads VVL.

This sequence belongs to the small GTPase superfamily. Ras family.

The protein localises to the cell membrane. It carries out the reaction GTP + H2O = GDP + phosphate + H(+). Its activity is regulated as follows. Alternates between an inactive form bound to GDP and an active form bound to GTP. Activated by a guanine nucleotide-exchange factor (GEF) and inactivated by a GTPase-activating protein (GAP). This Cryptococcus neoformans var. neoformans serotype D (strain B-3501A) (Filobasidiella neoformans) protein is Ras-like protein (RAS1).